The sequence spans 184 residues: NADH-quinone oxidoreductase subunit B 1 (184 aa).

[4Fe-4S] cluster-binding residues include cysteine 37, cysteine 38, cysteine 103, and cysteine 132.

This sequence belongs to the complex I 20 kDa subunit family. NDH-1 is composed of 14 different subunits. Subunits NuoB, C, D, E, F, and G constitute the peripheral sector of the complex. It depends on [4Fe-4S] cluster as a cofactor.

The protein localises to the cell membrane. It carries out the reaction a quinone + NADH + 5 H(+)(in) = a quinol + NAD(+) + 4 H(+)(out). Its function is as follows. NDH-1 shuttles electrons from NADH, via FMN and iron-sulfur (Fe-S) centers, to quinones in the respiratory chain. The immediate electron acceptor for the enzyme in this species is believed to be a menaquinone. Couples the redox reaction to proton translocation (for every two electrons transferred, four hydrogen ions are translocated across the cytoplasmic membrane), and thus conserves the redox energy in a proton gradient. The polypeptide is NADH-quinone oxidoreductase subunit B 1 (Streptomyces coelicolor (strain ATCC BAA-471 / A3(2) / M145)).